The chain runs to 690 residues: Iron-sulfur clusters transporter ATM1, mitochondrial (690 aa).

The transit peptide at 1–26 (MLLLPRCPVIGRIVRSKFRSGLIRNH) directs the protein to the mitochondrion. The Mitochondrial matrix segment spans residues 27–110 (SPVIFTVSKL…PKGNNKVRIR (84 aa)). Residues 111–132 (VLIALGLLISAKILNVQVPFFF) traverse the membrane as a helical segment. An ABC transmembrane type-1 domain is found at 111-401 (VLIALGLLIS…LGSVYRDLKQ (291 aa)). Residues 133-155 (KQTIDSMNIAWDDPTVALPAAIG) are Mitochondrial intermembrane-facing. Residues 156–179 (LTILCYGVARFGSVLFGELRNAVF) form a helical membrane-spanning segment. Over 180 to 228 (AKVAQNAIRTVSLQTFQHLMKLDLGWHLSRQTGGLTRAMDRGTKGISQV) the chain is Mitochondrial matrix. The helical transmembrane segment at 229–252 (LTAMVFHIIPISFEISVVCGILTY) threads the bilayer. Residue Q253 is a topological domain, mitochondrial intermembrane. Residues 254-274 (FGASFAAITFSTMLLYSIFTI) form a helical membrane-spanning segment. Over 275 to 340 (KTTAWRTHFR…SQIKVSQSLA (66 aa)) the chain is Mitochondrial matrix. Glutathione contacts are provided by residues 280–284 (RTHFR) and 343–346 (NSGQ). A helical transmembrane segment spans residues 341-359 (FLNSGQNLIFTTALTAMMY). Residues 360-374 (MGCTGVIGGNLTVGD) lie on the Mitochondrial intermembrane side of the membrane. Residues 375 to 396 (LVLINQLVFQLSVPLNFLGSVY) traverse the membrane as a helical segment. G393 contributes to the glutathione binding site. Residues 397–690 (RDLKQSLIDM…ENELKDQQEL (294 aa)) lie on the Mitochondrial matrix side of the membrane. One can recognise an ABC transporter domain in the interval 436 to 672 (ITFENVTFGY…PGSLYRELWT (237 aa)). ATP is bound by residues Y445 and 469 to 480 (GSSGSGKSTILK).

This sequence belongs to the ABC transporter superfamily. ABCB family. Heavy Metal importer (TC 3.A.1.210) subfamily. Homodimer.

The protein resides in the mitochondrion inner membrane. Its function is as follows. Performs an essential function in the generation of cytoplasmic iron-sulfur proteins by mediating the ATP-dependent export of Fe/S cluster precursors synthesized by NFS1 and other mitochondrial proteins. Hydrolyzes ATP. Binds glutathione and may function by transporting a glutathione-conjugated iron-sulfur compound. This is Iron-sulfur clusters transporter ATM1, mitochondrial from Saccharomyces cerevisiae (strain ATCC 204508 / S288c) (Baker's yeast).